We begin with the raw amino-acid sequence, 158 residues long: NAD(P)H-quinone oxidoreductase subunit J, chloroplastic (158 aa).

The protein belongs to the complex I 30 kDa subunit family. As to quaternary structure, NDH is composed of at least 16 different subunits, 5 of which are encoded in the nucleus.

It localises to the plastid. It is found in the chloroplast thylakoid membrane. It carries out the reaction a plastoquinone + NADH + (n+1) H(+)(in) = a plastoquinol + NAD(+) + n H(+)(out). The catalysed reaction is a plastoquinone + NADPH + (n+1) H(+)(in) = a plastoquinol + NADP(+) + n H(+)(out). NDH shuttles electrons from NAD(P)H:plastoquinone, via FMN and iron-sulfur (Fe-S) centers, to quinones in the photosynthetic chain and possibly in a chloroplast respiratory chain. The immediate electron acceptor for the enzyme in this species is believed to be plastoquinone. Couples the redox reaction to proton translocation, and thus conserves the redox energy in a proton gradient. The sequence is that of NAD(P)H-quinone oxidoreductase subunit J, chloroplastic from Amborella trichopoda.